Here is a 255-residue protein sequence, read N- to C-terminus: Hydroxyacylglutathione hydrolase (255 aa).

The Zn(2+) site is built by His55, His57, Asp59, His60, His111, Asp131, and His169.

The protein belongs to the metallo-beta-lactamase superfamily. Glyoxalase II family. In terms of assembly, monomer. Zn(2+) is required as a cofactor.

It catalyses the reaction an S-(2-hydroxyacyl)glutathione + H2O = a 2-hydroxy carboxylate + glutathione + H(+). Its pathway is secondary metabolite metabolism; methylglyoxal degradation; (R)-lactate from methylglyoxal: step 2/2. In terms of biological role, thiolesterase that catalyzes the hydrolysis of S-D-lactoyl-glutathione to form glutathione and D-lactic acid. The chain is Hydroxyacylglutathione hydrolase from Chromohalobacter salexigens (strain ATCC BAA-138 / DSM 3043 / CIP 106854 / NCIMB 13768 / 1H11).